The primary structure comprises 728 residues: Sodium-dependent transporter snf-5 (728 aa).

The Cytoplasmic segment spans residues 1 to 84 (MADSGSNEEA…PEEEEEKRDG (84 aa)). A disordered region spans residues 1-84 (MADSGSNEEA…PEEEEEKRDG (84 aa)). 2 stretches are compositionally biased toward low complexity: residues 29–50 (QQVS…STQS) and 60–73 (KNTT…TLDT). Residues 85–105 (FGNSFEFVLTSLGLAVGLGNI) traverse the membrane as a helical segment. 4 residues coordinate Na(+): Gly-97, Ala-99, Val-100, and Asn-104. At 106-119 (WRFPTRAYNNGGSA) the chain is on the extracellular side. The helical transmembrane segment at 120–140 (FLIPYLTCAFLFGLPAVYFEF) threads the bilayer. The Cytoplasmic portion of the chain corresponds to 141-162 (LTGQYQGKSPPVIFRRVRPILE). The helical transmembrane segment at 163–183 (GVGWMGVFVAALVAIYYIVIV) threads the bilayer. Over 184-285 (SWISIYMINI…PSSGMLDFGG (102 aa)) the chain is Extracellular. The cysteines at positions 204 and 214 are disulfide-linked. Asn-210, Asn-225, Asn-232, Asn-237, and Asn-257 each carry an N-linked (GlcNAc...) asparagine glycan. The helical transmembrane segment at 286–306 (FNWPVFAAMSVCWLLTGLGIL) threads the bilayer. Residues 307-314 (KGAKIMGK) lie on the Cytoplasmic side of the membrane. Residues 315–335 (ISYVSVLVPYVLVVVLFINGV) form a helical membrane-spanning segment. Residues 336 to 364 (FQDGSGVGLEMYFGTPNYTKLYEQDTWTE) lie on the Extracellular side of the membrane. The N-linked (GlcNAc...) asparagine glycan is linked to Asn-352. Residues 365–386 (ALKQLCFSLSVGHGGLISLSSY) form a helical membrane-spanning segment. Ser-372 is a Na(+) binding site. Topologically, residues 387 to 396 (SPKRNNIFRD) are cytoplasmic. Residues 397–417 (ALIVIIGDTTMSLVGGGAVFA) traverse the membrane as a helical segment. At 418–451 (TLGYLAKATGQDVKDVVKSGLSLAFVVYPEAMTR) the chain is on the extracellular side. Residues 452 to 472 (MPVPWLWCFIFFLMLFLLGAS) traverse the membrane as a helical segment. Position 469 (Leu-469) interacts with Na(+). Topologically, residues 473–495 (TEIALVDVFCSCIYDQYPRFRNR) are cytoplasmic. The helical transmembrane segment at 496–516 (KWIVVIAWCSVLYCIGLVFST) threads the bilayer. The Extracellular portion of the chain corresponds to 517–531 (RAGYYWFEMFDEYAA). A helical membrane pass occupies residues 532-552 (GFSSVCTVVCELLVMMYIYGF). At 553–578 (RNVRDDITEVVGHARNKFTGAIGAHS) the chain is on the cytoplasmic side. A helical membrane pass occupies residues 579-599 (WYFTANWMVISPSIALILVGL). Residues 600–616 (SFVREYPYMGRHDIYPA) lie on the Extracellular side of the membrane. A helical transmembrane segment spans residues 617–637 (VFDIFGWFLSFLPVIIVPIFM). Residues 638–728 (LLNFIRCRNR…DTSSTYHQVY (91 aa)) are Cytoplasmic-facing. The segment covering 687-699 (PWDEENVDLTDSE) has biased composition (acidic residues). The tract at residues 687–728 (PWDEENVDLTDSESESRNAASGDVPIDDVATIDTSSTYHQVY) is disordered. Residues 718 to 728 (IDTSSTYHQVY) are compositionally biased toward polar residues.

This sequence belongs to the sodium:neurotransmitter symporter (SNF) (TC 2.A.22) family. As to expression, expressed in the INT-9 cells and posterior cells of the alimentary canal of the intestine, gut epithelial cells, the pharynx of some worms, two cells of the rectal gland, and in DVA, DVB and DVC neurons and amphid sensory neurons ASI, ADF and ASK neurons.

It localises to the cell membrane. Its function is as follows. Sodium-dependent amino acid transporter that mediates the uptake of the L-enantiomers of various amino acids, including L-proline and L-methionine, and also of acidic amino acids such as L-glutamic acid and L-aspartic acid. May additionally have a role in potassium-dependent amino acid absorption. In response to the availability of amino acid nutrients, may play a role in dauer formation. May play a role in promoting fertility. The polypeptide is Sodium-dependent transporter snf-5 (Caenorhabditis elegans).